A 253-amino-acid chain; its full sequence is 5'/3'-nucleotidase SurE (253 aa).

Positions 8, 9, 39, and 92 each coordinate a divalent metal cation.

Belongs to the SurE nucleotidase family. The cofactor is a divalent metal cation.

The protein resides in the cytoplasm. It catalyses the reaction a ribonucleoside 5'-phosphate + H2O = a ribonucleoside + phosphate. The catalysed reaction is a ribonucleoside 3'-phosphate + H2O = a ribonucleoside + phosphate. The enzyme catalyses [phosphate](n) + H2O = [phosphate](n-1) + phosphate + H(+). Its function is as follows. Nucleotidase with a broad substrate specificity as it can dephosphorylate various ribo- and deoxyribonucleoside 5'-monophosphates and ribonucleoside 3'-monophosphates with highest affinity to 3'-AMP. Also hydrolyzes polyphosphate (exopolyphosphatase activity) with the preference for short-chain-length substrates (P20-25). Might be involved in the regulation of dNTP and NTP pools, and in the turnover of 3'-mononucleotides produced by numerous intracellular RNases (T1, T2, and F) during the degradation of various RNAs. This is 5'/3'-nucleotidase SurE from Cronobacter sakazakii (strain ATCC BAA-894) (Enterobacter sakazakii).